We begin with the raw amino-acid sequence, 158 residues long: MVPKLFTSQICLLLLLGLLGVEGSLHAAPQKFTRAQWFSIQHIQTTPLRCTNAMRAINKYQHRCKNQNTFLHTTFAAVVNVCGNTNITCPRNASLNNCHHSRVQVPLTYCNLTGPPTITNCVYSSTQANMFYVVACDNRDQRDPPQYPVVPVHLDTTI.

A signal peptide spans 1-27 (MVPKLFTSQICLLLLLGLLGVEGSLHA). The active-site Proton acceptor is the H42. Disulfide bonds link C50/C110, C64/C121, C82/C136, and C89/C98. 3'-nitrotyrosine is present on Y60. 65–69 (KNQNT) lines the substrate pocket. Residues N86, N92, and N111 are each glycosylated (N-linked (GlcNAc...) asparagine). H153 functions as the Proton donor in the catalytic mechanism.

The protein belongs to the pancreatic ribonuclease family. In terms of assembly, interacts with and forms a tight 1:1 complex with RNH1. Dimerization of two such complexes may occur.

Its subcellular location is the lysosome. The protein localises to the cytoplasmic granule. It carries out the reaction an [RNA] containing cytidine + H2O = an [RNA]-3'-cytidine-3'-phosphate + a 5'-hydroxy-ribonucleotide-3'-[RNA].. It catalyses the reaction an [RNA] containing uridine + H2O = an [RNA]-3'-uridine-3'-phosphate + a 5'-hydroxy-ribonucleotide-3'-[RNA].. Functionally, this is a non-secretory ribonuclease. It is a pyrimidine specific nuclease with a slight preference for U. Cytotoxin and helminthotoxin. Possesses a wide variety of biological activities. The polypeptide is Non-secretory ribonuclease (RNASE2) (Aotus trivirgatus (Three-striped night monkey)).